Here is a 254-residue protein sequence, read N- to C-terminus: Dihydroanticapsin 7-dehydrogenase (254 aa).

9-31 is an NAD(+) binding site; the sequence is LITGGASGIGYAAVQAFLNQQAN. Position 139 (Ser-139) interacts with substrate. Tyr-152 acts as the Proton acceptor in catalysis.

The protein belongs to the short-chain dehydrogenases/reductases (SDR) family.

The catalysed reaction is L-dihydroanticapsin + NAD(+) = L-anticapsin + NADH + H(+). Its pathway is antibiotic biosynthesis; bacilysin biosynthesis. Part of the bacABCDEFG operon responsible for the biosynthesis of bacilysin, an irreversible inactivator of the glutaminase domain of glucosamine synthetase. Catalyzes the dehydrogenation of the C7-hydroxyl group in the 4S-tetrahydrotyrosine (4S-H4Tyr) to yield anticapsin (epoxycyclohexanonyl-Ala). The protein is Dihydroanticapsin 7-dehydrogenase of Bacillus amyloliquefaciens (Bacillus velezensis).